The sequence spans 550 residues: Formate--tetrahydrofolate ligase (550 aa).

ATP is bound at residue 60–67 (TPFGEGKT).

The protein belongs to the formate--tetrahydrofolate ligase family.

It catalyses the reaction (6S)-5,6,7,8-tetrahydrofolate + formate + ATP = (6R)-10-formyltetrahydrofolate + ADP + phosphate. It participates in one-carbon metabolism; tetrahydrofolate interconversion. The sequence is that of Formate--tetrahydrofolate ligase from Campylobacter curvus (strain 525.92).